A 333-amino-acid chain; its full sequence is S-adenosylmethionine-dependent nucleotide dehydratase (333 aa).

A Radical SAM core domain is found at 1–239 (MNIKTIVINW…SAPQKQNNVI (239 aa)). Residues C16, C20, and C23 each coordinate [4Fe-4S] cluster.

The protein belongs to the radical SAM superfamily. Viperin family. It depends on [4Fe-4S] cluster as a cofactor.

It carries out the reaction GTP + AH2 + S-adenosyl-L-methionine = 3'-deoxy-3',4'-didehydro-GTP + 5'-deoxyadenosine + L-methionine + A + H2O + H(+). In terms of biological role, expression of pVip56 in E.coli (strain MG1655) confers resistance to phage P1; has no effect against T7. Catalyzes the conversion of guanosine triphosphate (GTP) to 3'-deoxy-3',4'-didehydro-GTP (ddhGTP), probably via a SAM-dependent radical mechanism. The modified nucleotide represses transcription from T7 RNA polymerase-directed genes (possibly by acting as chain terminators), strongly suggesting these nucleotides block viral polymerase transcription. How this protein allows bacteria to resist viruses that do not encode their own RNA polymerase (such as lambda, P1) is unknown. This chain is S-adenosylmethionine-dependent nucleotide dehydratase, found in Fibrobacter sp. (strain UWH6).